Reading from the N-terminus, the 355-residue chain is Protein RecA (355 aa).

67–74 (GPESSGKT) provides a ligand contact to ATP.

Belongs to the RecA family.

Its subcellular location is the cytoplasm. Functionally, can catalyze the hydrolysis of ATP in the presence of single-stranded DNA, the ATP-dependent uptake of single-stranded DNA by duplex DNA, and the ATP-dependent hybridization of homologous single-stranded DNAs. It interacts with LexA causing its activation and leading to its autocatalytic cleavage. This Histophilus somni (strain 2336) (Haemophilus somnus) protein is Protein RecA.